The following is a 455-amino-acid chain: Xylan O-acetyltransferase 3 (455 aa).

Residues 1–15 (MSKPQQQSPPSTTTT) are compositionally biased toward low complexity. Residues 1–32 (MSKPQQQSPPSTTTTSPPPPPPSTPPPASSSR) are disordered. Topologically, residues 1-42 (MSKPQQQSPPSTTTTSPPPPPPSTPPPASSSRSLLSALRRSP) are cytoplasmic. The segment covering 16 to 28 (SPPPPPPSTPPPA) has biased composition (pro residues). Residues 43-59 (VTTLVAAFFLLALFMYG) form a helical; Signal-anchor for type II membrane protein membrane-spanning segment. Residues 60-455 (EDVRTLAELS…PSTHPSLPPQ (396 aa)) lie on the Lumenal side of the membrane. N-linked (GlcNAc...) asparagine glycosylation is found at N82, N107, and N146. Cystine bridges form between C96/C147, C118/C183, C127/C423, and C339/C419. The GDS motif motif lies at 170–172 (GDS). S172 serves as the catalytic Nucleophile. 2 N-linked (GlcNAc...) asparagine glycosylation sites follow: N278 and N348. D418 acts as the Proton donor in catalysis. A DXXH motif motif is present at residues 418 to 421 (DCIH). The active-site Proton acceptor is the H421.

Belongs to the PC-esterase family. TBL subfamily. As to expression, highly expressed in leaves. Expressed in roots, stems and inflorescences.

The protein resides in the golgi apparatus membrane. Xylan acetyltransferase required for 2-O- and 3-O-monoacetylation of xylosyl residues in xylan. Catalyzes the 2-O-acetylation of xylan, followed by nonenzymatic acetyl migration to the O-3 position, resulting in products that are monoacetylated at both O-2 and O-3 positions. This chain is Xylan O-acetyltransferase 3, found in Oryza sativa subsp. japonica (Rice).